The primary structure comprises 189 residues: Apolipoprotein D (189 aa).

A signal peptide spans 1 to 20 (MATMLLLLATLAGLFTTTEG). Gln-21 carries the post-translational modification Pyrrolidone carboxylic acid. 2 cysteine pairs are disulfide-bonded: Cys-28–Cys-134 and Cys-61–Cys-185. Asn-65 and Asn-98 each carry an N-linked (GlcNAc...) asparagine glycan.

It belongs to the calycin superfamily. Lipocalin family. In terms of assembly, homodimer. Expressed in liver, kidney, bladder, adrenal, cerebrum, duodenum, testis, lung, spleen, pancreas, heart and skin.

Its subcellular location is the secreted. Its function is as follows. APOD occurs in the macromolecular complex with lecithin-transport and binding of bilin. Appears to be able to transport a variety of ligands in a number of different contexts. The chain is Apolipoprotein D (Apod) from Rattus norvegicus (Rat).